Here is a 180-residue protein sequence, read N- to C-terminus: Large ribosomal subunit protein uL5 (180 aa).

Belongs to the universal ribosomal protein uL5 family. As to quaternary structure, part of the 50S ribosomal subunit; part of the 5S rRNA/L5/L18/L25 subcomplex. Contacts the 5S rRNA and the P site tRNA. Forms a bridge to the 30S subunit in the 70S ribosome.

Functionally, this is one of the proteins that bind and probably mediate the attachment of the 5S RNA into the large ribosomal subunit, where it forms part of the central protuberance. In the 70S ribosome it contacts protein S13 of the 30S subunit (bridge B1b), connecting the 2 subunits; this bridge is implicated in subunit movement. Contacts the P site tRNA; the 5S rRNA and some of its associated proteins might help stabilize positioning of ribosome-bound tRNAs. The sequence is that of Large ribosomal subunit protein uL5 from Xanthomonas axonopodis pv. citri (strain 306).